We begin with the raw amino-acid sequence, 128 residues long: Protein FAM229A (128 aa).

Positions 1–96 (MQSSPSTLGP…VATDQNPVRP (96 aa)) are disordered.

The protein belongs to the FAM229 family.

This Mus musculus (Mouse) protein is Protein FAM229A (Fam229a).